The following is a 275-amino-acid chain: 4-hydroxy-tetrahydrodipicolinate reductase (275 aa).

NAD(+) is bound by residues 13–18 (GAAGKM) and 108–110 (GTT). Histidine 164 serves as the catalytic Proton donor/acceptor. Histidine 165 serves as a coordination point for (S)-2,3,4,5-tetrahydrodipicolinate. The active-site Proton donor is the lysine 168. 174–175 (GT) is a (S)-2,3,4,5-tetrahydrodipicolinate binding site.

Belongs to the DapB family.

It localises to the cytoplasm. The enzyme catalyses (S)-2,3,4,5-tetrahydrodipicolinate + NAD(+) + H2O = (2S,4S)-4-hydroxy-2,3,4,5-tetrahydrodipicolinate + NADH + H(+). It catalyses the reaction (S)-2,3,4,5-tetrahydrodipicolinate + NADP(+) + H2O = (2S,4S)-4-hydroxy-2,3,4,5-tetrahydrodipicolinate + NADPH + H(+). It participates in amino-acid biosynthesis; L-lysine biosynthesis via DAP pathway; (S)-tetrahydrodipicolinate from L-aspartate: step 4/4. In terms of biological role, catalyzes the conversion of 4-hydroxy-tetrahydrodipicolinate (HTPA) to tetrahydrodipicolinate. This chain is 4-hydroxy-tetrahydrodipicolinate reductase, found in Acaryochloris marina (strain MBIC 11017).